Here is a 129-residue protein sequence, read N- to C-terminus: Glycine cleavage system H protein (129 aa).

The region spanning 24 to 106 (SYTVGISEHA…FGDGWFFRVM (83 aa)) is the Lipoyl-binding domain. Lys65 is modified (N6-lipoyllysine).

This sequence belongs to the GcvH family. The glycine cleavage system is composed of four proteins: P, T, L and H. It depends on (R)-lipoate as a cofactor.

Its function is as follows. The glycine cleavage system catalyzes the degradation of glycine. The H protein shuttles the methylamine group of glycine from the P protein to the T protein. This is Glycine cleavage system H protein from Shewanella halifaxensis (strain HAW-EB4).